We begin with the raw amino-acid sequence, 78 residues long: MHEELLTLCDCAFEARLIELETRVSFQEQALTEISEALAETRLIGARNAELMRHLLEELGKVRNTLYEHPIDEPPPHY.

Belongs to the SlyX family.

The polypeptide is Protein SlyX homolog (Xylella fastidiosa (strain 9a5c)).